Here is a 122-residue protein sequence, read N- to C-terminus: Large ribosomal subunit protein uL18 (122 aa).

The protein belongs to the universal ribosomal protein uL18 family. Part of the 50S ribosomal subunit; part of the 5S rRNA/L5/L18/L25 subcomplex. Contacts the 5S and 23S rRNAs.

Functionally, this is one of the proteins that bind and probably mediate the attachment of the 5S RNA into the large ribosomal subunit, where it forms part of the central protuberance. The polypeptide is Large ribosomal subunit protein uL18 (Thermotoga neapolitana (strain ATCC 49049 / DSM 4359 / NBRC 107923 / NS-E)).